The primary structure comprises 151 residues: Transcriptional regulator MraZ (151 aa).

SpoVT-AbrB domains lie at 5–52 (ANAI…PLDE) and 81–124 (AVDL…DEDA).

It belongs to the MraZ family. Forms oligomers.

It is found in the cytoplasm. The protein resides in the nucleoid. The chain is Transcriptional regulator MraZ from Pseudomonas fluorescens (strain SBW25).